The chain runs to 404 residues: Sorting nexin-5 (404 aa).

Ala-2 carries the post-translational modification N-acetylalanine. The 148-residue stretch at Leu-25–Leu-172 folds into the PX domain. Residues Ser-40–Lys-46, Phe-99–Lys-105, and Glu-113–Met-116 contribute to the a 1,2-diacyl-sn-glycero-3-phospho-(1D-myo-inositol-4,5-bisphosphate) site. The interaction with DOCK1 stretch occupies residues Asp-169–Val-261. The membrane-binding amphipathic helix stretch occupies residues Phe-183–Thr-200. Ser-193 carries the post-translational modification Phosphoserine. The BAR domain occupies Val-202–Asn-404. Position 275 is an N6-acetyllysine (Lys-275).

Belongs to the sorting nexin family. Forms heterodimers with BAR domain-containing sorting nexins SNX1 and SNX2; does not homodimerize. The heterodimers are proposed to self-assemble into helical arrays on the membrane to stabilize and expand local membrane curvature underlying endosomal tubule formation. Thought to be a component of the originally described retromer complex (also called SNX-BAR retromer) which is a pentamer containing the heterotrimeric retromer cargo-selective complex (CSC), also described as vacuolar protein sorting subcomplex (VPS), and a heterodimeric membrane-deforming subcomplex formed between SNX1 or SNX2 and SNX5 or SNX6 (also called SNX-BAR subcomplex); the respective CSC and SNX-BAR subcomplexes associate with low affinity. Interacts with SNX1, SNX2, VPS26A, VPS29, VPS35, DCTN1, DOCK1, MIB1, PIP5K1C isoform 3. Interacts with HGS; increased by PIP5K1C isoform 3 kinase activity and by PtdIns(3P) and/or PtdIns(3,4)P2. In terms of assembly, (Microbial infection) Interacts with human cytomegalovirus proteins UL35 and UL35A; these interactions inhibit the ability of USP7 to form nuclear bodies.

It is found in the endosome. The protein localises to the early endosome. The protein resides in the early endosome membrane. Its subcellular location is the cell membrane. It localises to the cytoplasmic vesicle membrane. It is found in the cytoplasm. The protein localises to the cell projection. The protein resides in the phagocytic cup. Its subcellular location is the ruffle. Its function is as follows. Involved in several stages of intracellular trafficking. Interacts with membranes containing phosphatidylinositol 3-phosphate (PtdIns(3P)) or phosphatidylinositol 3,4-bisphosphate (PtdIns(3,4)P2). Acts in part as component of the retromer membrane-deforming SNX-BAR subcomplex. The SNX-BAR retromer mediates retrograde transport of cargo proteins from endosomes to the trans-Golgi network (TGN) and is involved in endosome-to-plasma membrane transport for cargo protein recycling. The SNX-BAR subcomplex functions to deform the donor membrane into a tubular profile called endosome-to-TGN transport carrier (ETC). Does not have in vitro vesicle-to-membrane remodeling activity. Involved in retrograde transport of lysosomal enzyme receptor IGF2R. May function as link between endosomal transport vesicles and dynactin. Plays a role in the internalization of EGFR after EGF stimulation. Involved in EGFR endosomal sorting and degradation; the function involves PIP5K1C isoform 3 and is retromer-independent. Together with PIP5K1C isoform 3 facilitates HGS interaction with ubiquitinated EGFR, which initiates EGFR sorting to intraluminal vesicles (ILVs) of the multivesicular body for subsequent lysosomal degradation. Involved in E-cadherin sorting and degradation; inhibits PIP5K1C isoform 3-mediated E-cadherin degradation. Plays a role in macropinocytosis. The polypeptide is Sorting nexin-5 (SNX5) (Homo sapiens (Human)).